The sequence spans 506 residues: Galactose/methyl galactoside import ATP-binding protein MglA (506 aa).

ABC transporter domains follow at residues 14–249 (LEMK…VGRS) and 264–506 (VMLE…SLYL). An ATP-binding site is contributed by 46–53 (GENGAGKS).

Belongs to the ABC transporter superfamily. Galactose/methyl galactoside importer (TC 3.A.1.2.3) family. In terms of assembly, the complex is composed of one ATP-binding protein (MglA), two transmembrane proteins (MglC) and a solute-binding protein (MglB).

It localises to the cell inner membrane. It catalyses the reaction D-galactose(out) + ATP + H2O = D-galactose(in) + ADP + phosphate + H(+). It carries out the reaction methyl beta-D-galactoside(out) + ATP + H2O = methyl beta-D-galactoside(in) + ADP + phosphate + H(+). Functionally, part of the ABC transporter complex MglABC involved in galactose/methyl galactoside import. Responsible for energy coupling to the transport system. This Sodalis glossinidius (strain morsitans) protein is Galactose/methyl galactoside import ATP-binding protein MglA.